The sequence spans 163 residues: 16S rRNA aminocarboxypropyltransferase (163 aa).

S-adenosyl-L-methionine-binding residues include Thr-18, Ile-66, Leu-87, and Ser-106.

Belongs to the TDD superfamily. TSR3 family.

The protein resides in the cytoplasm. It carries out the reaction an N(1)-methylpseudouridine in rRNA + S-adenosyl-L-methionine = N(1)-methyl-N(3)-[(3S)-3-amino-3-carboxypropyl]pseudouridine in rRNA + S-methyl-5'-thioadenosine + H(+). Aminocarboxypropyltransferase that catalyzes the aminocarboxypropyl transfer on pseudouridine corresponding to position 914 in M.jannaschii 16S rRNA. It constitutes the last step in biosynthesis of the hypermodified N1-methyl-N3-(3-amino-3-carboxypropyl) pseudouridine (m1acp3-Psi). In Thermoplasma acidophilum (strain ATCC 25905 / DSM 1728 / JCM 9062 / NBRC 15155 / AMRC-C165), this protein is 16S rRNA aminocarboxypropyltransferase.